The following is a 127-amino-acid chain: Large ribosomal subunit protein bL12 (127 aa).

Belongs to the bacterial ribosomal protein bL12 family. In terms of assembly, homodimer. Part of the ribosomal stalk of the 50S ribosomal subunit. Forms a multimeric L10(L12)X complex, where L10 forms an elongated spine to which 2 to 4 L12 dimers bind in a sequential fashion. Binds GTP-bound translation factors.

In terms of biological role, forms part of the ribosomal stalk which helps the ribosome interact with GTP-bound translation factors. Is thus essential for accurate translation. In Streptomyces coelicolor (strain ATCC BAA-471 / A3(2) / M145), this protein is Large ribosomal subunit protein bL12.